The chain runs to 400 residues: Enoyl-[acyl-carrier-protein] reductase [NADH] (400 aa).

NAD(+)-binding positions include 48–53, 74–75, 111–112, and 139–140; these read GASTGY, FE, DA, and LA. Position 225 (Y225) interacts with substrate. The active-site Proton donor is Y235. Residues K244 and 273–275 contribute to the NAD(+) site; that span reads VVT.

Belongs to the TER reductase family. In terms of assembly, monomer.

It carries out the reaction a 2,3-saturated acyl-[ACP] + NAD(+) = a (2E)-enoyl-[ACP] + NADH + H(+). Its pathway is lipid metabolism; fatty acid biosynthesis. Its function is as follows. Involved in the final reduction of the elongation cycle of fatty acid synthesis (FAS II). Catalyzes the reduction of a carbon-carbon double bond in an enoyl moiety that is covalently linked to an acyl carrier protein (ACP). This is Enoyl-[acyl-carrier-protein] reductase [NADH] from Burkholderia cenocepacia (strain HI2424).